Reading from the N-terminus, the 431-residue chain is Histidinol dehydrogenase (431 aa).

NAD(+)-binding residues include Y127, Q185, and N208. Substrate-binding residues include S234, Q256, and H259. Positions 256 and 259 each coordinate Zn(2+). Residues E323 and H324 each act as proton acceptor in the active site. Substrate-binding residues include H324, D357, E411, and H416. D357 contributes to the Zn(2+) binding site. H416 is a binding site for Zn(2+).

It belongs to the histidinol dehydrogenase family. The cofactor is Zn(2+).

The catalysed reaction is L-histidinol + 2 NAD(+) + H2O = L-histidine + 2 NADH + 3 H(+). The protein operates within amino-acid biosynthesis; L-histidine biosynthesis; L-histidine from 5-phospho-alpha-D-ribose 1-diphosphate: step 9/9. Its function is as follows. Catalyzes the sequential NAD-dependent oxidations of L-histidinol to L-histidinaldehyde and then to L-histidine. The polypeptide is Histidinol dehydrogenase (Vibrio vulnificus (strain YJ016)).